Reading from the N-terminus, the 147-residue chain is MKPRHKRAAIIAGGLAALGIAAYLVLNAFQSNLVFFFSPTQVFAGEAPKNRAFRIGGLVKEGTVKRDNLTVAFVVTDTAKEVPVSYTGILPDLFKEGKGVVAQGKLDENGHFTATEVLAKHDENYMPPEAKAALDQAQIQKTIKSLK.

The Cytoplasmic portion of the chain corresponds to 1-7 (MKPRHKR). A helical; Signal-anchor for type II membrane protein transmembrane segment spans residues 8–28 (AAIIAGGLAALGIAAYLVLNA). Topologically, residues 29 to 147 (FQSNLVFFFS…QIQKTIKSLK (119 aa)) are periplasmic. Positions 121 and 125 each coordinate heme.

Belongs to the CcmE/CycJ family.

The protein resides in the cell inner membrane. Its function is as follows. Heme chaperone required for the biogenesis of c-type cytochromes. Transiently binds heme delivered by CcmC and transfers the heme to apo-cytochromes in a process facilitated by CcmF and CcmH. The protein is Cytochrome c-type biogenesis protein CcmE of Albidiferax ferrireducens (strain ATCC BAA-621 / DSM 15236 / T118) (Rhodoferax ferrireducens).